Reading from the N-terminus, the 397-residue chain is Pectate lyase (397 aa).

Residues 1–25 (MDVYRIRISVFFLLVLLTFAALTTA) form the signal peptide. An N-linked (GlcNAc...) asparagine glycan is attached at Asn134. Residues Asp191, Asp216, and Asp220 each coordinate Ca(2+). N-linked (GlcNAc...) asparagine glycosylation occurs at Asn227. Arg272 is a catalytic residue.

The protein belongs to the polysaccharide lyase 1 family. It depends on Ca(2+) as a cofactor.

It catalyses the reaction Eliminative cleavage of (1-&gt;4)-alpha-D-galacturonan to give oligosaccharides with 4-deoxy-alpha-D-galact-4-enuronosyl groups at their non-reducing ends.. Its pathway is glycan metabolism; pectin degradation; 2-dehydro-3-deoxy-D-gluconate from pectin: step 2/5. In Nicotiana tabacum (Common tobacco), this protein is Pectate lyase.